The primary structure comprises 226 residues: ATP synthase subunit a (226 aa).

The next 6 membrane-spanning stretches (helical) occupy residues 18–38, 79–99, 105–125, 134–154, 179–199, and 201–221; these read FITG…SLGA, LAGT…IPGF, SWSF…FEGI, FAHF…IEII, LIML…VLFF, and GILQ…GAVL.

It belongs to the ATPase A chain family. As to quaternary structure, F-type ATPases have 2 components, CF(1) - the catalytic core - and CF(0) - the membrane proton channel. CF(1) has five subunits: alpha(3), beta(3), gamma(1), delta(1), epsilon(1). CF(0) has three main subunits: a(1), b(2) and c(9-12). The alpha and beta chains form an alternating ring which encloses part of the gamma chain. CF(1) is attached to CF(0) by a central stalk formed by the gamma and epsilon chains, while a peripheral stalk is formed by the delta and b chains.

The protein resides in the cell inner membrane. Key component of the proton channel; it plays a direct role in the translocation of protons across the membrane. The chain is ATP synthase subunit a from Helicobacter pylori (strain J99 / ATCC 700824) (Campylobacter pylori J99).